The following is a 392-amino-acid chain: Chaperone protein DnaJ 2 (392 aa).

In terms of domain architecture, J spans 10–75 (DFYKELGVSS…AKRKEYDETR (66 aa)). The CR-type zinc-finger motif lies at 161–239 (GVAMPLRLTS…CKGTGVTTRT (79 aa)). Cys174, Cys177, Cys191, Cys194, Cys213, Cys216, Cys227, and Cys230 together coordinate Zn(2+). 4 CXXCXGXG motif repeats span residues 174-181 (CTNCHGSG), 191-198 (CPTCNGSG), 213-220 (CTDCRGSG), and 227-234 (CDECKGTG).

The protein belongs to the DnaJ family. Homodimer. It depends on Zn(2+) as a cofactor.

It localises to the cytoplasm. Its function is as follows. Participates actively in the response to hyperosmotic and heat shock by preventing the aggregation of stress-denatured proteins and by disaggregating proteins, also in an autonomous, DnaK-independent fashion. Unfolded proteins bind initially to DnaJ; upon interaction with the DnaJ-bound protein, DnaK hydrolyzes its bound ATP, resulting in the formation of a stable complex. GrpE releases ADP from DnaK; ATP binding to DnaK triggers the release of the substrate protein, thus completing the reaction cycle. Several rounds of ATP-dependent interactions between DnaJ, DnaK and GrpE are required for fully efficient folding. Also involved, together with DnaK and GrpE, in the DNA replication of plasmids through activation of initiation proteins. The polypeptide is Chaperone protein DnaJ 2 (Mycolicibacterium paratuberculosis (strain ATCC BAA-968 / K-10) (Mycobacterium paratuberculosis)).